A 161-amino-acid chain; its full sequence is Allophycocyanin alpha chain (161 aa).

Asn-71 is modified (N4-methylasparagine). Cys-81 contacts (2R,3E)-phycocyanobilin.

The protein belongs to the phycobiliprotein family. Heterodimer of an alpha and a beta chain. Post-translationally, contains one covalently linked phycocyanobilin chromophore.

The protein localises to the plastid. Its subcellular location is the chloroplast thylakoid membrane. Light-harvesting photosynthetic bile pigment-protein from the phycobiliprotein complex. Allophycocyanin has a maximum absorption at approximately 650 nanometers. The protein is Allophycocyanin alpha chain (apcA) of Porphyra purpurea (Red seaweed).